The sequence spans 815 residues: Serotype-specific mannosyltransferase WbdA (815 aa).

An alpha-(1-&gt;2)-mannosyltransferase region spans residues 1 to 374 (MSRAIIENAG…WANTAHLAIE (374 aa)). The alpha-(1-&gt;3)-mannosyltransferase stretch occupies residues 431 to 804 (KLLVDISVLA…WKQSAEFLLK (374 aa)).

It belongs to the glycosyltransferase group 1 family. Glycosyltransferase 4 subfamily. As to quaternary structure, monomer. Interacts with the C-terminal region of WbdD.

The protein localises to the cell inner membrane. The enzyme catalyses [alpha-D-Man-(1-&gt;3)-alpha-D-Man-(1-&gt;3)-alpha-D-Man-(1-&gt;2)-alpha-D-Man-(1-&gt;2)](n)-alpha-D-Man-(1-&gt;3)-alpha-D-Man-(1-&gt;3)-alpha-D-Man-(1-&gt;3)-alpha-D-GlcNAc-di-trans,octa-cis-undecaprenyl diphosphate + 2 GDP-alpha-D-mannose = alpha-D-Man-(1-&gt;2)-alpha-D-Man-(1-&gt;2)-[alpha-D-Man-(1-&gt;3)-alpha-D-Man-(1-&gt;3)-alpha-D-Man-(1-&gt;2)-alpha-D-Man-(1-&gt;2)](n)-alpha-D-Man-(1-&gt;3)-alpha-D-Man-(1-&gt;3)-alpha-D-Man-(1-&gt;3)-alpha-D-GlcNAc-di-trans,octa-cis-undecaprenyl diphosphate + 2 GDP + 2 H(+). It carries out the reaction alpha-D-Man-(1-&gt;2)-alpha-D-Man-(1-&gt;2)-[alpha-D-Man-(1-&gt;3)-alpha-D-Man-(1-&gt;3)-alpha-D-Man-(1-&gt;2)-alpha-D-Man-(1-&gt;2)](n)-alpha-D-Man-(1-&gt;3)-alpha-D-Man-(1-&gt;3)-alpha-D-Man-(1-&gt;3)-alpha-D-GlcNAc-di-trans,octa-cis-undecaprenyl diphosphate + 2 GDP-alpha-D-mannose = [alpha-D-Man-(1-&gt;3)-alpha-D-Man-(1-&gt;3)-alpha-D-Man-(1-&gt;2)-alpha-D-Man-(1-&gt;2)](n+1)-alpha-D-Man-(1-&gt;3)-alpha-D-Man-(1-&gt;3)-alpha-D-Man-(1-&gt;3)-alpha-D-GlcNAc-di-trans,octa-cis-undecaprenyl diphosphate + 2 GDP + 2 H(+). The protein operates within bacterial outer membrane biogenesis; LPS O-antigen biosynthesis. In terms of biological role, mannosyltransferase involved in the biosynthesis of the repeat unit of the lipopolysaccharide (LPS) O-antigen region. Catalyzes the polymerization of a tetrasaccharide repeat unit containing two alpha-(1-&gt;3)- and two alpha-(1-&gt;2)-linked mannopyranose residues. The protein is Serotype-specific mannosyltransferase WbdA of Escherichia coli.